Reading from the N-terminus, the 299-residue chain is MHSLATAAPVPAALAQVDREKIYQWINELSSPDTRENALLELSKKRESVPDLAPMLWHSFGTIAALLQEIVNIYPSINPPTLTAHQSNRVCNALALLQCVASHPETRSAFLAAHIPLFLYPFLHTVSKTRPFEYLRLTSLGVIGALVKTDEQEVINFLLTTEIIPLCLRIMESGSELSKTVATFILQKILLDDTGLAYICQTYERFSHVAMILGKMVLQLSKEPSARLLKHVVRCYLRLSDNPRAREALRQCLPDQLKDTTFAQVLKDDTTTKRWLAQLVKNLQEGQVTDPRGIPLPPQ.

It belongs to the CNOT9 family. As to quaternary structure, homodimer. Component of the CCR4-NOT complex.

It localises to the nucleus. Its subcellular location is the cytoplasm. The protein resides in the P-body. In terms of biological role, component of the CCR4-NOT complex which is one of the major cellular mRNA deadenylases and is linked to various cellular processes including bulk mRNA degradation, miRNA-mediated repression, translational repression during translational initiation and general transcription regulation. Additional complex functions may be a consequence of its influence on mRNA expression. Involved in down-regulation of MYB- and JUN-dependent transcription. Enhances ligand-dependent transcriptional activity of nuclear hormone receptors. May play a role in cell differentiation. The polypeptide is CCR4-NOT transcription complex subunit 9 (Xenopus tropicalis (Western clawed frog)).